Reading from the N-terminus, the 215-residue chain is Beta-crystallin A3 (215 aa).

Residues 1-30 (MGEAAVPPELDTFPAAKMAQTNPLPVPMGP) are N-terminal arm. Beta/gamma crystallin 'Greek key' domains lie at 31–70 (WKIT…KVEC) and 71–117 (GAWV…RPVC). Positions 118–123 (SANHKE) are connecting peptide. 2 consecutive Beta/gamma crystallin 'Greek key' domains span residues 124–165 (SKIT…KIPC) and 166–214 (GAWV…RRIQ).

Belongs to the beta/gamma-crystallin family. In terms of assembly, homo/heterodimer, or complexes of higher-order. The structure of beta-crystallin oligomers seems to be stabilized through interactions between the N-terminal arms.

Crystallins are the dominant structural components of the vertebrate eye lens. The sequence is that of Beta-crystallin A3 (CRYBA1) from Gallus gallus (Chicken).